The following is a 150-amino-acid chain: Large ribosomal subunit protein bL9 (150 aa).

The protein belongs to the bacterial ribosomal protein bL9 family.

In terms of biological role, binds to the 23S rRNA. The protein is Large ribosomal subunit protein bL9 of Corynebacterium efficiens (strain DSM 44549 / YS-314 / AJ 12310 / JCM 11189 / NBRC 100395).